The primary structure comprises 147 residues: Large ribosomal subunit protein bL9 (147 aa).

The protein belongs to the bacterial ribosomal protein bL9 family.

In terms of biological role, binds to the 23S rRNA. The polypeptide is Large ribosomal subunit protein bL9 (Exiguobacterium sp. (strain ATCC BAA-1283 / AT1b)).